The sequence spans 481 residues: Beta-amyrin 28-monooxygenase (481 aa).

A helical membrane pass occupies residues 4 to 24 (FYVPLLSLFVLFVSLSFYFLF). Position 428 (Cys428) interacts with heme.

The protein belongs to the cytochrome P450 family. Heme serves as cofactor.

It is found in the membrane. It catalyses the reaction beta-amyrin + 3 reduced [NADPH--hemoprotein reductase] + 3 O2 = oleanolate + 3 oxidized [NADPH--hemoprotein reductase] + 4 H2O + 4 H(+). Functionally, catalyzes the oxidation of the methyl group to a carboxyl group at the C-28 position of beta-amyrin to form oleanolate. The polypeptide is Beta-amyrin 28-monooxygenase (Kalopanax septemlobus (Castor aralia)).